The sequence spans 319 residues: Cytochrome c biogenesis protein CcsA (319 aa).

8 helical membrane passes run 15–35 (FSIVSIVITIHLITLVVNKIV), 44–64 (GMILTFSCITGLLVIRWIFAG), 71–91 (LYESLIFLSWSFYIIHMIPYF), 96–116 (LSAITAPGAIFTQGFATSGFF), 141–161 (MILAYAALLCGSLLSVALLVI), 223–243 (VISLGFLFLTMGILSGAVWAN), 258–278 (WAFITWTIFAIYLHIKTNINL), and 284–304 (AIVASIGFLIIWICYFGVNLL).

The protein belongs to the CcmF/CycK/Ccl1/NrfE/CcsA family. As to quaternary structure, may interact with Ccs1.

It localises to the plastid. The protein localises to the chloroplast thylakoid membrane. In terms of biological role, required during biogenesis of c-type cytochromes (cytochrome c6 and cytochrome f) at the step of heme attachment. This is Cytochrome c biogenesis protein CcsA from Fagopyrum esculentum subsp. ancestrale (Wild buckwheat).